The primary structure comprises 423 residues: POU domain, class 5, transcription factor 1.3 (423 aa).

Residues 85–211 are disordered; it reads GALSSGDPSP…GSGNEEDGTT (127 aa). The span at 94–110 shows a compositional bias: basic and acidic residues; sequence PEGRNEEDHGSISEERS. Polar residues-rich tracts occupy residues 111-120, 156-173, and 194-203; these read SGTPSPNSPM, PQQS…GASN, and PSPNNASFGS. The POU-specific domain occupies 207–281; the sequence is EDGTTLEEME…LLEQWLGEAE (75 aa). The homeobox DNA-binding region spans 301 to 360; it reads KRKMRTCFDSVLKGRLEGHFMCNQKPGARELAEIAKELGLEKDVVRVWFCNRRQKEKSKS.

The protein belongs to the POU transcription factor family. Class-5 subfamily. In terms of assembly, interacts with the transcription factors tcf7l1/tcf3 and vegt.

Its subcellular location is the nucleus. Functionally, transcription factor that binds to the octamer motif (5'-ATTTGCAT-3'). Antagonizes the activity of nodal/activin signaling during gastrulation to suppress mesendoderm formation. Acts maternally to inhibit vegt and beta-catenin-activated gene transcription, probably by forming a transcriptional repression complex on the promoters of target genes. Binds to an octamer motif in interspersed RNA. In Xenopus tropicalis (Western clawed frog), this protein is POU domain, class 5, transcription factor 1.3 (pou5f1.3).